The primary structure comprises 549 residues: Cation/acetate symporter ActP (549 aa).

Helical transmembrane passes span 33-53, 77-97, 103-123, 148-168, 183-203, 206-226, 262-282, 303-323, 355-375, 404-424, 428-448, 464-484, and 493-513; these read WQAIIMFLIFVVFTLGITYWA, LAIAGDYMSAASFLGISALVF, GLIYSLGFLVGWPIILFLIAE, ILSACGSLVVVALYLIAQMVG, IAVVLVGVLMMMYVLFGGMLA, WVQIIKAVLLLFGASFMAFMV, ISALSLGLGLMFGTAGLPHIL, GFMGYFYILTFIIGFGAIMLV, LFLGFISAVAFATILAVVAGL, VSKITVLVLGVIAIILGFLFE, IAFMVGLAFAIAASCNFPIIL, GGWLGLLTAVVLMILGPTIWV, and IFPYEYPALFSISVAFLGIWF.

Belongs to the sodium:solute symporter (SSF) (TC 2.A.21) family.

It is found in the cell inner membrane. In terms of biological role, transports acetate. The polypeptide is Cation/acetate symporter ActP (Salmonella paratyphi C (strain RKS4594)).